We begin with the raw amino-acid sequence, 347 residues long: Very-long-chain 3-oxoacyl-CoA reductase (347 aa).

Residues 20–40 form a helical membrane-spanning segment; the sequence is LLWVVFGLGVLKCTTLSLRFL. Residues aspartate 120, asparagine 147, tyrosine 223, lysine 227, valine 256, and serine 258 each coordinate NADP(+). Tyrosine 223 serves as the catalytic Proton donor. The Lowers pKa of active site Tyr role is filled by lysine 227.

It belongs to the short-chain dehydrogenases/reductases (SDR) family. Interacts with the fatty acid elongation system components ELO3 and TSC13.

It is found in the endoplasmic reticulum membrane. It catalyses the reaction a very-long-chain (3R)-3-hydroxyacyl-CoA + NADP(+) = a very-long-chain 3-oxoacyl-CoA + NADPH + H(+). The enzyme catalyses 3-oxooctadecanoyl-CoA + NADPH + H(+) = (3R)-hydroxyoctadecanoyl-CoA + NADP(+). It carries out the reaction 3-oxoeicosanoyl-CoA + NADPH + H(+) = (3R)-hydroxyeicosanoyl-CoA + NADP(+). The catalysed reaction is 3-oxodocosanoyl-CoA + NADPH + H(+) = (3R)-hydroxydocosanoyl-CoA + NADP(+). It catalyses the reaction 3-oxotetracosanoyl-CoA + NADPH + H(+) = (3R)-hydroxytetracosanoyl-CoA + NADP(+). The enzyme catalyses 3-oxohexacosanoyl-CoA + NADPH + H(+) = (3R)-hydroxyhexacosanoyl-CoA + NADP(+). It participates in lipid metabolism; fatty acid biosynthesis. Its function is as follows. Component of the microsomal membrane bound fatty acid elongation system, which produces the 26-carbon very long-chain fatty acids (VLCFA) from palmitate. Catalyzes the reduction of the 3-ketoacyl-CoA intermediate that is formed in each cycle of fatty acid elongation. VLCFAs serve as precursors for ceramide and sphingolipids. The sequence is that of Very-long-chain 3-oxoacyl-CoA reductase (IFA38) from Saccharomyces cerevisiae (strain ATCC 204508 / S288c) (Baker's yeast).